Reading from the N-terminus, the 256-residue chain is Floral homeotic protein APETALA 1 (256 aa).

The MADS-box domain maps to 1 to 61 (MGRGRVQLKR…GKLFEYSTDS (61 aa)). The region spanning 88 to 178 (NTNWSMEYNR…SKQIKEREKI (91 aa)) is the K-box domain. The interval 184–206 (EQWDQQNHGHNMPPPPPPQQHQI) is disordered.

Homodimer capable of binding to CArG-box sequences.

It is found in the nucleus. Its function is as follows. Transcription factor that promotes early floral meristem identity in synergy with LEAFY. Displays a redundant function with CAULIFLOWER in the up-regulation of LEAFY. Required subsequently for the transition of an inflorescence meristem into a floral meristem, and for the normal development of sepals and petals in flowers. Regulates positively B class homeotic proteins. The protein is Floral homeotic protein APETALA 1 (AP1) of Arabidopsis lyrata subsp. lyrata (Lyre-leaved rock-cress).